Consider the following 164-residue polypeptide: Peptide deformylase-like (164 aa).

Glu134 is an active-site residue.

Belongs to the polypeptide deformylase family.

This is Peptide deformylase-like from Brucella melitensis biotype 1 (strain ATCC 23456 / CCUG 17765 / NCTC 10094 / 16M).